We begin with the raw amino-acid sequence, 199 residues long: Thymidylate kinase (199 aa).

G7–T14 serves as a coordination point for ATP.

This sequence belongs to the thymidylate kinase family.

The catalysed reaction is dTMP + ATP = dTDP + ADP. Phosphorylation of dTMP to form dTDP in both de novo and salvage pathways of dTTP synthesis. The protein is Thymidylate kinase of Acinetobacter baumannii (strain AB307-0294).